The primary structure comprises 160 residues: Phosphopantetheine adenylyltransferase (160 aa).

Ser-9 is a substrate binding site. Residues 9–10 (SF) and His-17 each bind ATP. Residues Lys-41, Leu-73, and Lys-87 each coordinate substrate. ATP-binding positions include 88-90 (GLR), Glu-98, and 123-129 (YGYLSSS).

The protein belongs to the bacterial CoaD family. As to quaternary structure, homohexamer. The cofactor is Mg(2+).

The protein resides in the cytoplasm. It catalyses the reaction (R)-4'-phosphopantetheine + ATP + H(+) = 3'-dephospho-CoA + diphosphate. It participates in cofactor biosynthesis; coenzyme A biosynthesis; CoA from (R)-pantothenate: step 4/5. Functionally, reversibly transfers an adenylyl group from ATP to 4'-phosphopantetheine, yielding dephospho-CoA (dPCoA) and pyrophosphate. The polypeptide is Phosphopantetheine adenylyltransferase (Caldanaerobacter subterraneus subsp. tengcongensis (strain DSM 15242 / JCM 11007 / NBRC 100824 / MB4) (Thermoanaerobacter tengcongensis)).